The following is a 147-amino-acid chain: MIRRPPLSLLDLEAAPLGSRWALTAVLDALPWNSDGLIAAIAQQHDSGEVLMLAWMNRQALGETLASGQACYWSRSRRCLWRKGESSGHRQRLIEARLDCDGDAVLLLVDQQGPACHTGRPNCFYNAIRDGAVEVISSPLKDSRHDS.

Asp-99 lines the Mg(2+) pocket. Cys-100 contributes to the Zn(2+) binding site. Asp-101 and Asp-103 together coordinate Mg(2+). 2 residues coordinate Zn(2+): Cys-116 and Cys-123.

Belongs to the PRA-CH family. In terms of assembly, homodimer. Requires Mg(2+) as cofactor. Zn(2+) serves as cofactor.

It localises to the cytoplasm. It catalyses the reaction 1-(5-phospho-beta-D-ribosyl)-5'-AMP + H2O = 1-(5-phospho-beta-D-ribosyl)-5-[(5-phospho-beta-D-ribosylamino)methylideneamino]imidazole-4-carboxamide. The protein operates within amino-acid biosynthesis; L-histidine biosynthesis; L-histidine from 5-phospho-alpha-D-ribose 1-diphosphate: step 3/9. Catalyzes the hydrolysis of the adenine ring of phosphoribosyl-AMP. The polypeptide is Phosphoribosyl-AMP cyclohydrolase 2 (Pseudomonas fluorescens (strain ATCC BAA-477 / NRRL B-23932 / Pf-5)).